Reading from the N-terminus, the 551-residue chain is Interleukin-2 receptor subunit beta (551 aa).

The first 26 residues, 1-26, serve as a signal peptide directing secretion; it reads MATLALSWCLPLLILLLPLATSSASA. Residues 27-240 are Extracellular-facing; sequence AVNGTSRFTC…TKPAALGKDT (214 aa). Asparagine 29, asparagine 43, and asparagine 71 each carry an N-linked (GlcNAc...) asparagine glycan. Residues cysteine 36 and cysteine 46 are joined by a disulfide bond. A disulfide bridge links cysteine 74 with cysteine 86. The region spanning 134–234 is the Fibronectin type-III domain; sequence APISLQVVHV…QPLAFRTKPA (101 aa). Asparagine 149 carries N-linked (GlcNAc...) asparagine glycosylation. A WSXWS motif motif is present at residues 220–224; it reads WSPWS. A helical transmembrane segment spans residues 241–265; that stretch reads IPWLGHLLVGLSGAFGFIILVYLLI. Topologically, residues 266 to 551 are cytoplasmic; it reads NCRNTGPWLK…LQDQDPTHLV (286 aa). Positions 278–286 match the Box 1 motif motif; sequence LKCHTPDPS. 3 disordered regions span residues 389–417, 430–484, and 496–517; these read EEEP…EDDA, FSPS…DLVD, and AGEQ…ARPP.

The protein belongs to the type I cytokine receptor family. Type 4 subfamily. Non-covalent dimer of an alpha and a beta subunit. IL2R exists in 3 different forms: a high affinity dimer, an intermediate affinity monomer (beta subunit), and a low affinity monomer (alpha subunit). The high and intermediate affinity forms also associate with a gamma subunit. Interacts with SHB upon interleukin stimulation.

It is found in the cell membrane. Its subcellular location is the cell surface. Receptor for interleukin-2. This beta subunit is involved in receptor mediated endocytosis and transduces the mitogenic signals of IL2. Probably in association with IL15RA, involved in the stimulation of neutrophil phagocytosis by IL15. This is Interleukin-2 receptor subunit beta (IL2RB) from Macaca fascicularis (Crab-eating macaque).